A 232-amino-acid polypeptide reads, in one-letter code: Ubiquinone biosynthesis O-methyltransferase (232 aa).

4 residues coordinate S-adenosyl-L-methionine: arginine 36, glycine 55, aspartate 76, and leucine 120.

It belongs to the methyltransferase superfamily. UbiG/COQ3 family.

It catalyses the reaction a 3-demethylubiquinol + S-adenosyl-L-methionine = a ubiquinol + S-adenosyl-L-homocysteine + H(+). The catalysed reaction is a 3-(all-trans-polyprenyl)benzene-1,2-diol + S-adenosyl-L-methionine = a 2-methoxy-6-(all-trans-polyprenyl)phenol + S-adenosyl-L-homocysteine + H(+). It functions in the pathway cofactor biosynthesis; ubiquinone biosynthesis. O-methyltransferase that catalyzes the 2 O-methylation steps in the ubiquinone biosynthetic pathway. The chain is Ubiquinone biosynthesis O-methyltransferase from Pseudomonas aeruginosa (strain ATCC 15692 / DSM 22644 / CIP 104116 / JCM 14847 / LMG 12228 / 1C / PRS 101 / PAO1).